A 230-amino-acid chain; its full sequence is Ribose-5-phosphate isomerase A (230 aa).

Substrate is bound by residues 31-34, 88-91, and 101-104; these read TGST, DGSD, and KGGG. The active-site Proton acceptor is glutamate 110. Substrate is bound at residue lysine 128.

The protein belongs to the ribose 5-phosphate isomerase family. Homodimer.

The enzyme catalyses aldehydo-D-ribose 5-phosphate = D-ribulose 5-phosphate. The protein operates within carbohydrate degradation; pentose phosphate pathway; D-ribose 5-phosphate from D-ribulose 5-phosphate (non-oxidative stage): step 1/1. In terms of biological role, catalyzes the reversible conversion of ribose-5-phosphate to ribulose 5-phosphate. The protein is Ribose-5-phosphate isomerase A of Lactobacillus helveticus (strain DPC 4571).